The primary structure comprises 459 residues: Zinc finger protein ZFP2 (459 aa).

C2H2-type zinc fingers lie at residues 100–122, 128–150, 156–178, 184–206, 212–234, 240–262, 268–290, 296–318, 324–346, 352–374, 380–402, 408–430, and 436–458; these read YGCD…QRIH, YTCN…QRTH, YKCH…QRTH, YQCK…ERIH, YECN…QRSH, YECS…QRNH, YKCN…QRLH, FECN…RRIH, YECM…QVIH, YECT…QRIH, YECD…QRIH, and YQCN…QRTH.

It belongs to the krueppel C2H2-type zinc-finger protein family.

It localises to the nucleus. Its function is as follows. Probable transcription factor involved in neuronal differentiation and/or phenotypic maintenance. The chain is Zinc finger protein ZFP2 (Zfp2) from Mus musculus (Mouse).